We begin with the raw amino-acid sequence, 468 residues long: Shaggy-related protein kinase theta (468 aa).

Disordered stretches follow at residues Met-1–Thr-53 and His-91–Glu-112. The Protein kinase domain maps to Tyr-134–Phe-418. ATP is bound by residues Val-140–Val-148 and Lys-163. Asp-259 acts as the Proton acceptor in catalysis. Tyr-294 is subject to Phosphotyrosine.

This sequence belongs to the protein kinase superfamily. CMGC Ser/Thr protein kinase family. GSK-3 subfamily. Autophosphorylated mainly on threonine and serine residues. In developing pollen.

The enzyme catalyses L-seryl-[protein] + ATP = O-phospho-L-seryl-[protein] + ADP + H(+). It catalyses the reaction L-threonyl-[protein] + ATP = O-phospho-L-threonyl-[protein] + ADP + H(+). Functionally, may mediate extracellular signals to regulate transcription in differentiating cells. This Brassica napus (Rape) protein is Shaggy-related protein kinase theta.